We begin with the raw amino-acid sequence, 197 residues long: Ribosome maturation factor RimP (197 aa).

It belongs to the RimP family.

The protein resides in the cytoplasm. Required for maturation of 30S ribosomal subunits. The chain is Ribosome maturation factor RimP from Acidovorax sp. (strain JS42).